A 148-amino-acid chain; its full sequence is Snaclec stejaggregin-A subunit beta-2 (148 aa).

An N-terminal signal peptide occupies residues 1–23 (MGQFIFVSFGLLVVLLSLSGAGA). An intrachain disulfide couples Cys27 to Cys38. The C-type lectin domain occupies 34-145 (YDLYCYKVFK…CSRTHYVVCK (112 aa)). N-linked (GlcNAc...) asparagine glycans are attached at residues Asn47 and Asn78. 2 cysteine pairs are disulfide-bonded: Cys55-Cys144 and Cys121-Cys136.

It belongs to the snaclec family. In terms of assembly, heteromultimer; disulfide-linked. Expressed by the venom gland.

The protein resides in the secreted. Functionally, interferes with one step of hemostasis (modulation of platelet aggregation, or coagulation cascade, for example). This Trimeresurus stejnegeri (Chinese green tree viper) protein is Snaclec stejaggregin-A subunit beta-2.